The primary structure comprises 67 residues: ATP synthase protein 8 (67 aa).

Residues 8–24 (TWSITIMSMIMTLFIVF) form a helical membrane-spanning segment. Lys-54 carries the post-translational modification N6-acetyllysine; alternate. Residue Lys-54 is modified to N6-succinyllysine; alternate. Lys-57 carries the N6-acetyllysine modification.

The protein belongs to the ATPase protein 8 family. As to quaternary structure, F-type ATPases have 2 components, CF(1) - the catalytic core - and CF(0) - the membrane proton channel. Component of an ATP synthase complex composed of ATP5PB, ATP5MC1, ATP5F1E, ATP5PD, ATP5ME, ATP5PF, ATP5MF, MT-ATP6, MT-ATP8, ATP5F1A, ATP5F1B, ATP5F1D, ATP5F1C, ATP5PO, ATP5MG, ATP5MK and ATP5MJ. Interacts with PRICKLE3.

The protein localises to the mitochondrion membrane. Mitochondrial membrane ATP synthase (F(1)F(0) ATP synthase or Complex V) produces ATP from ADP in the presence of a proton gradient across the membrane which is generated by electron transport complexes of the respiratory chain. F-type ATPases consist of two structural domains, F(1) - containing the extramembraneous catalytic core and F(0) - containing the membrane proton channel, linked together by a central stalk and a peripheral stalk. During catalysis, ATP synthesis in the catalytic domain of F(1) is coupled via a rotary mechanism of the central stalk subunits to proton translocation. Part of the complex F(0) domain. Minor subunit located with subunit a in the membrane. The protein is ATP synthase protein 8 (MT-ATP8) of Felis silvestris lybica (African wildcat).